A 401-amino-acid polypeptide reads, in one-letter code: Dual-specificity RNA methyltransferase RlmN (401 aa).

Glu114 serves as the catalytic Proton acceptor. Positions 120 to 365 (DKGRGTLCVS…TMVRRTRGDD (246 aa)) constitute a Radical SAM core domain. The cysteines at positions 127 and 370 are disulfide-linked. The [4Fe-4S] cluster site is built by Cys134, Cys138, and Cys141. Residues 187–188 (GE), Ser219, 241–243 (SLH), and Asn327 contribute to the S-adenosyl-L-methionine site. The active-site S-methylcysteine intermediate is the Cys370.

It belongs to the radical SAM superfamily. RlmN family. The cofactor is [4Fe-4S] cluster.

It localises to the cytoplasm. It catalyses the reaction adenosine(2503) in 23S rRNA + 2 reduced [2Fe-2S]-[ferredoxin] + 2 S-adenosyl-L-methionine = 2-methyladenosine(2503) in 23S rRNA + 5'-deoxyadenosine + L-methionine + 2 oxidized [2Fe-2S]-[ferredoxin] + S-adenosyl-L-homocysteine. The catalysed reaction is adenosine(37) in tRNA + 2 reduced [2Fe-2S]-[ferredoxin] + 2 S-adenosyl-L-methionine = 2-methyladenosine(37) in tRNA + 5'-deoxyadenosine + L-methionine + 2 oxidized [2Fe-2S]-[ferredoxin] + S-adenosyl-L-homocysteine. Functionally, specifically methylates position 2 of adenine 2503 in 23S rRNA and position 2 of adenine 37 in tRNAs. m2A2503 modification seems to play a crucial role in the proofreading step occurring at the peptidyl transferase center and thus would serve to optimize ribosomal fidelity. The chain is Dual-specificity RNA methyltransferase RlmN from Xanthomonas campestris pv. campestris (strain 8004).